The sequence spans 238 residues: Large ribosomal subunit protein uL2 (238 aa).

A compositionally biased stretch (polar residues) spans 1 to 11 (MGKRLISQNRG). 2 disordered regions span residues 1–22 (MGKRLISQNRGRGTPTYRAPSH) and 202–223 (FGGGAWKHPGKPTTVSRNAPPG).

The protein belongs to the universal ribosomal protein uL2 family. As to quaternary structure, part of the 50S ribosomal subunit. Forms a bridge to the 30S subunit in the 70S ribosome.

Functionally, one of the primary rRNA binding proteins. Required for association of the 30S and 50S subunits to form the 70S ribosome, for tRNA binding and peptide bond formation. It has been suggested to have peptidyltransferase activity; this is somewhat controversial. Makes several contacts with the 16S rRNA in the 70S ribosome. The chain is Large ribosomal subunit protein uL2 from Methanosarcina mazei (strain ATCC BAA-159 / DSM 3647 / Goe1 / Go1 / JCM 11833 / OCM 88) (Methanosarcina frisia).